We begin with the raw amino-acid sequence, 628 residues long: Neutral/alkaline invertase 1, mitochondrial (628 aa).

A mitochondrion-targeting transit peptide spans 1 to 35; sequence MAAAAISHLRRGAPRHARALLYLSTRRFSSSSAAG. Residues 79–90 are compositionally biased toward low complexity; sequence ASSAPPLESPPI. Positions 79 to 113 are disordered; the sequence is ASSAPPLESPPIEELPDDATPPPEEEPGLPAPEKD.

The protein belongs to the glycosyl hydrolase 100 family. As to expression, expressed in roots, leaf and stems.

The protein localises to the mitochondrion. The enzyme catalyses Hydrolysis of terminal non-reducing beta-D-fructofuranoside residues in beta-D-fructofuranosides.. Functionally, mitochondrial invertase that cleaves sucrose into glucose and fructose. This Oryza sativa subsp. japonica (Rice) protein is Neutral/alkaline invertase 1, mitochondrial.